Reading from the N-terminus, the 466-residue chain is Soluble pyridine nucleotide transhydrogenase (466 aa).

36 to 45 contacts FAD; sequence ERYQNVGGGC.

This sequence belongs to the class-I pyridine nucleotide-disulfide oxidoreductase family. Homooligomer; probable homooctamer. Requires FAD as cofactor.

The protein localises to the cytoplasm. The enzyme catalyses NAD(+) + NADPH = NADH + NADP(+). Conversion of NADPH, generated by peripheral catabolic pathways, to NADH, which can enter the respiratory chain for energy generation. In Shigella flexneri, this protein is Soluble pyridine nucleotide transhydrogenase.